Consider the following 1192-residue polypeptide: DNA topoisomerase 2 (1192 aa).

Residues asparagine 64, asparagine 95, and 142–149 contribute to the ATP site; that span reads GTNGVGLK. Positions 438, 539, and 541 each coordinate Mg(2+). The region spanning 707–1174 is the Topo IIA-type catalytic domain; sequence IPNFLDGMTR…PGASVWLEEI (468 aa). The active-site O-(5'-phospho-DNA)-tyrosine intermediate is the tyrosine 800.

The protein belongs to the type II topoisomerase family. It depends on Mg(2+) as a cofactor. Mn(2+) is required as a cofactor. Ca(2+) serves as cofactor.

The protein resides in the host cytoplasm. It carries out the reaction ATP-dependent breakage, passage and rejoining of double-stranded DNA.. Functionally, type II topoisomerase. Processively relaxes supercoiled DNA. Displays DNA-supercoiling activity only when associated with the viral histone-like protein. This chain is DNA topoisomerase 2 (TOP), found in African swine fever virus (strain Badajoz 1971 Vero-adapted) (Ba71V).